Here is a 1184-residue protein sequence, read N- to C-terminus: Protocadherin-12 (1184 aa).

A signal peptide spans 1–24 (MMQLLQLLLGLLGPGGYLFLLGDC). Residues 25-718 (QEVTTLTVKY…PGALSMSMLT (694 aa)) lie on the Extracellular side of the membrane. 5 Cadherin domains span residues 28 to 135 (TTLT…QPRF), 136 to 244 (PKGE…SPAF), 245 to 352 (AESS…IPSI), 355 to 460 (TWAS…APVF), and 461 to 565 (EKSR…APEV). A glycan (N-linked (GlcNAc...) asparagine) is linked at asparagine 415. 3 N-linked (GlcNAc...) asparagine glycosylation sites follow: asparagine 582, asparagine 659, and asparagine 662. Residues 600–711 (PAGTDTPPLA…LRDSARKPGA (112 aa)) form the Cadherin 6 domain. A helical membrane pass occupies residues 719–739 (VICLAVLLGIFGLILALFMSI). Over 740–1184 (CRTEKKDNRA…RGSSSSSRCL (445 aa)) the chain is Cytoplasmic. Disordered regions lie at residues 854–928 (RQRN…ESGP) and 973–1023 (QFQP…DPEE). Residue serine 859 is modified to Phosphoserine. Positions 1012 to 1023 (PEQEEGPLDPEE) are enriched in acidic residues. Serine 1062 carries the phosphoserine modification. A disordered region spans residues 1153–1184 (SAASGMKVQGDPGGKTGTEGKSRGSSSSSRCL). Residues 1175 to 1184 (RGSSSSSRCL) show a composition bias toward low complexity.

Cleaved by ADAM10 close to the transmembrane domain to release the Protocadherin-12, secreted form in the serum. Cleavage results in reduced cellular adhesion in a cell migration assay. Expressed in highly vascularized tissues including the heart and placenta, but most tissues contain a low level of expression. Prominent expression in the spleen. Present in villous and extravillous trophoblast (at protein level).

It is found in the cell membrane. Its subcellular location is the cell junction. It localises to the secreted. Functionally, cellular adhesion molecule that may play an important role in cell-cell interactions at interendothelial junctions. Acts as a regulator of cell migration, probably via increasing cell-cell adhesion. Promotes homotypic calcium-dependent aggregation and adhesion and clusters at intercellular junctions. Unable to bind to catenins, weakly associates with the cytoskeleton. The sequence is that of Protocadherin-12 from Homo sapiens (Human).